Here is a 321-residue protein sequence, read N- to C-terminus: Large ribosomal subunit protein uL10 (321 aa).

The segment at 284–321 (SAGTAPTGGGAAAAAVEEKKEEPEEESDDDIGFSLFDD) is disordered. The segment covering 306–321 (PEEESDDDIGFSLFDD) has biased composition (acidic residues).

The protein belongs to the universal ribosomal protein uL10 family. In terms of assembly, P0 forms a pentameric complex by interaction with dimers of P1 and P2. Post-translationally, phosphorylated.

Functionally, ribosomal protein P0 is the functional equivalent of E.coli protein L10. The sequence is that of Large ribosomal subunit protein uL10 from Oxybasis rubra (Red goosefoot).